A 431-amino-acid polypeptide reads, in one-letter code: Glycolipid 2-alpha-mannosyltransferase 1 (431 aa).

Over 1 to 9 the chain is Cytoplasmic; sequence MASTRSNAR. Residues 10–28 traverse the membrane as a helical; Signal-anchor for type II membrane protein segment; it reads LIRFGIFALVLIGCGYILT. Residues 29 to 431 are Lumenal-facing; sequence RGSSFQPPNY…RQKGWEKYTA (403 aa). Positions 35-44 are enriched in polar residues; that stretch reads PPNYQQTQSP. Positions 35 to 73 are disordered; the sequence is PPNYQQTQSPAAHEKQTGNVAAGGGAGSGSAGAQVPLGK. Gly residues predominate over residues 55-64; the sequence is AAGGGAGSGS. E318 serves as the catalytic Nucleophile.

The protein belongs to the glycosyltransferase 15 family.

The protein localises to the golgi apparatus membrane. It participates in protein modification; protein glycosylation. Functionally, involved in O-glycosylation of cell wall and secreted proteins. Transfers an alpha-D-mannosyl residue from GDP-mannose into lipid-linked oligosaccharide, forming an alpha-(1-&gt;2)-D-mannosyl-D-mannose linkage. Mainly responsible for the addition of the second mannose residue in an O-linked mannose pentamer. Can also substitute for MNT2 by adding the third mannose residue. Important for adherence to host surfaces and for virulence. The polypeptide is Glycolipid 2-alpha-mannosyltransferase 1 (MNT1) (Candida albicans (strain SC5314 / ATCC MYA-2876) (Yeast)).